The sequence spans 829 residues: Periplasmic nitrate reductase (829 aa).

Positions 1 to 30 (MKMTRRAFVKANAAASAAAVAGITLPASAA) form a signal peptide, tat-type signal. In terms of domain architecture, 4Fe-4S Mo/W bis-MGD-type spans 41–97 (ITWDKAPCRFCGTGCSVLVGTQNGKVVATQGDPEAPVNKGLNCIKGYFLSKIMYGQD). Residues Cys-48, Cys-51, Cys-55, and Cys-83 each contribute to the [4Fe-4S] cluster site. Residues Lys-85, Gln-152, Asn-177, Cys-181, 214 to 221 (WGSNMAEM), 245 to 249 (STYYH), 264 to 266 (QSD), Met-374, Gln-378, Asn-484, 510 to 511 (SD), Lys-533, Asp-560, and 718 to 727 (TGRVLEHWHT) contribute to the Mo-bis(molybdopterin guanine dinucleotide) site. Phe-794 is a substrate binding site. Positions 802 and 819 each coordinate Mo-bis(molybdopterin guanine dinucleotide).

This sequence belongs to the prokaryotic molybdopterin-containing oxidoreductase family. NasA/NapA/NarB subfamily. Component of the periplasmic nitrate reductase NapAB complex composed of NapA and NapB. [4Fe-4S] cluster serves as cofactor. It depends on Mo-bis(molybdopterin guanine dinucleotide) as a cofactor. Post-translationally, predicted to be exported by the Tat system. The position of the signal peptide cleavage has not been experimentally proven.

The protein localises to the periplasm. It carries out the reaction 2 Fe(II)-[cytochrome] + nitrate + 2 H(+) = 2 Fe(III)-[cytochrome] + nitrite + H2O. Functionally, catalytic subunit of the periplasmic nitrate reductase complex NapAB. Receives electrons from NapB and catalyzes the reduction of nitrate to nitrite. This chain is Periplasmic nitrate reductase, found in Vibrio vulnificus (strain YJ016).